Reading from the N-terminus, the 520-residue chain is Succinyl-CoA:3-ketoacid coenzyme A transferase 2A, mitochondrial (520 aa).

Residues 1-39 (MAALRLLAWAFSRRVSAHRPQPTLPHHLIRHYPTTRCGK) constitute a mitochondrion transit peptide. Residues 280 to 299 (ERLTTRDSPPAPGSKDQDPK) form a disordered region. Residue Glu-342 is the 5-glutamyl coenzyme A thioester intermediate of the active site.

The protein belongs to the 3-oxoacid CoA-transferase family. In terms of assembly, homodimer. As to expression, expressed in flagella of epididymal sperm.

The protein localises to the mitochondrion. It catalyses the reaction a 3-oxo acid + succinyl-CoA = a 3-oxoacyl-CoA + succinate. It functions in the pathway ketone metabolism; succinyl-CoA degradation; acetoacetyl-CoA from succinyl-CoA: step 1/1. Its function is as follows. Key enzyme for ketone body catabolism. Transfers the CoA moiety from succinate to acetoacetate. Formation of the enzyme-CoA intermediate proceeds via an unstable anhydride species formed between the carboxylate groups of the enzyme and substrate. Probably play and important roles in the energy metabolism of spermatozoa. This is Succinyl-CoA:3-ketoacid coenzyme A transferase 2A, mitochondrial (Oxct2a) from Rattus norvegicus (Rat).